The chain runs to 206 residues: MEFNVKTLEGKDAGKVSLSDAIFGLEPREDILARVIRWQLAKKQQGTHKAKGRAEVSRTGAKMYKQKGTGRARHHSARAPQFRGGGKAHGPVVRSHEHDLPKKVRALGLRLALSAKIKADDVIVIDNLVAAEAKTKALASVFETLGLTNALFIGGAELDGNFKLAAQNIPNIDVLPIQGINVYDIVRRGKLVLSKAAVEALEERFK.

The tract at residues 63-97 (MYKQKGTGRARHHSARAPQFRGGGKAHGPVVRSHE) is disordered. A compositionally biased stretch (basic residues) spans 64–77 (YKQKGTGRARHHSA).

Belongs to the universal ribosomal protein uL4 family. As to quaternary structure, part of the 50S ribosomal subunit.

One of the primary rRNA binding proteins, this protein initially binds near the 5'-end of the 23S rRNA. It is important during the early stages of 50S assembly. It makes multiple contacts with different domains of the 23S rRNA in the assembled 50S subunit and ribosome. Its function is as follows. Forms part of the polypeptide exit tunnel. This is Large ribosomal subunit protein uL4 from Rhizobium leguminosarum bv. trifolii (strain WSM2304).